Here is a 488-residue protein sequence, read N- to C-terminus: Ribulose bisphosphate carboxylase large chain (488 aa).

Residues Asn127 and Thr177 each contribute to the substrate site. Lys179 acts as the Proton acceptor in catalysis. Lys181 contacts substrate. Mg(2+) is bound by residues Lys205, Asp207, and Glu208. Lys205 is subject to N6-carboxylysine. The active-site Proton acceptor is the His297. Substrate is bound by residues Arg298, His330, and Ser382.

This sequence belongs to the RuBisCO large chain family. Type I subfamily. In terms of assembly, heterohexadecamer of 8 large chains and 8 small chains. The cofactor is Mg(2+).

It is found in the plastid. Its subcellular location is the chloroplast. The catalysed reaction is 2 (2R)-3-phosphoglycerate + 2 H(+) = D-ribulose 1,5-bisphosphate + CO2 + H2O. It carries out the reaction D-ribulose 1,5-bisphosphate + O2 = 2-phosphoglycolate + (2R)-3-phosphoglycerate + 2 H(+). Functionally, ruBisCO catalyzes two reactions: the carboxylation of D-ribulose 1,5-bisphosphate, the primary event in carbon dioxide fixation, as well as the oxidative fragmentation of the pentose substrate in the photorespiration process. Both reactions occur simultaneously and in competition at the same active site. The chain is Ribulose bisphosphate carboxylase large chain from Pyropia yezoensis (Susabi-nori).